A 442-amino-acid polypeptide reads, in one-letter code: UDP-N-acetylmuramoylalanine--D-glutamate ligase (442 aa).

115-121 (GSNGKST) contacts ATP.

The protein belongs to the MurCDEF family.

It localises to the cytoplasm. It carries out the reaction UDP-N-acetyl-alpha-D-muramoyl-L-alanine + D-glutamate + ATP = UDP-N-acetyl-alpha-D-muramoyl-L-alanyl-D-glutamate + ADP + phosphate + H(+). It participates in cell wall biogenesis; peptidoglycan biosynthesis. Cell wall formation. Catalyzes the addition of glutamate to the nucleotide precursor UDP-N-acetylmuramoyl-L-alanine (UMA). This Aliivibrio salmonicida (strain LFI1238) (Vibrio salmonicida (strain LFI1238)) protein is UDP-N-acetylmuramoylalanine--D-glutamate ligase.